The chain runs to 295 residues: MTLEEQFLSYLKNERSYSPKTVLAYQKDLAAAKKFWQENGGFPGWDQISRRDLEIYLLATGQKLASSTLSRKLSSLKSFYRFLTRRGLVKADPTVAIQLRRGKKKLPEFFYQDEVGQVIRSLNDGKPLTVRNRAIVALFYATGMRLSELTDLKIKQLDLENGMILVHGKGNKDRYVFFDQESKKYLEEYLQAARPSLLKNEPDTGAVFLNKLGRPISSRGIAKAVQQIFQKAGLTAGAHPHELRHSFATAMLNNGADLRSVQELLGHEDLSTTQIYTHVSMQHLTVEYRQHFPRK.

The Core-binding (CB) domain occupies 1–84; that stretch reads MTLEEQFLSY…SLKSFYRFLT (84 aa). The Tyr recombinase domain occupies 105 to 289; the sequence is KLPEFFYQDE…SMQHLTVEYR (185 aa). Residues Arg145, Lys169, His241, Arg244, and His267 contribute to the active site. Tyr276 acts as the O-(3'-phospho-DNA)-tyrosine intermediate in catalysis.

This sequence belongs to the 'phage' integrase family. XerC subfamily. Forms a cyclic heterotetrameric complex composed of two molecules of XerC and two molecules of XerD.

It localises to the cytoplasm. In terms of biological role, site-specific tyrosine recombinase, which acts by catalyzing the cutting and rejoining of the recombining DNA molecules. The XerC-XerD complex is essential to convert dimers of the bacterial chromosome into monomers to permit their segregation at cell division. It also contributes to the segregational stability of plasmids. This chain is Tyrosine recombinase XerC, found in Lactobacillus delbrueckii subsp. bulgaricus (strain ATCC 11842 / DSM 20081 / BCRC 10696 / JCM 1002 / NBRC 13953 / NCIMB 11778 / NCTC 12712 / WDCM 00102 / Lb 14).